A 40-amino-acid polypeptide reads, in one-letter code: Dolichyl-diphosphooligosaccharide--protein glycosyltransferase subunit 4 (40 aa).

The Lumenal portion of the chain corresponds to methionine 1–aspartate 4. The chain crosses the membrane as a helical span at residues valine 5–tyrosine 25. Over histidine 26–lysine 40 the chain is Cytoplasmic.

It belongs to the OST4 family. As to quaternary structure, component of the oligosaccharyltransferase (OST) complex.

It localises to the endoplasmic reticulum membrane. Subunit of the oligosaccharyl transferase (OST) complex that catalyzes the initial transfer of a defined glycan (Glc(3)Man(9)GlcNAc(2) in eukaryotes) from the lipid carrier dolichol-pyrophosphate to an asparagine residue within an Asn-X-Ser/Thr consensus motif in nascent polypeptide chains, the first step in protein N-glycosylation. N-glycosylation occurs cotranslationally and the complex associates with the Sec61 complex at the channel-forming translocon complex that mediates protein translocation across the endoplasmic reticulum (ER). All subunits are required for a maximal enzyme activity. The sequence is that of Dolichyl-diphosphooligosaccharide--protein glycosyltransferase subunit 4 from Drosophila virilis (Fruit fly).